The chain runs to 461 residues: Pup--protein ligase (461 aa).

E9 provides a ligand contact to Mg(2+). An ATP-binding site is contributed by R53. Residue Y55 coordinates Mg(2+). The Proton acceptor role is filled by D57. E63 contacts Mg(2+). Residues T66 and W420 each coordinate ATP.

This sequence belongs to the Pup ligase/Pup deamidase family. Pup-conjugating enzyme subfamily.

It carries out the reaction ATP + [prokaryotic ubiquitin-like protein]-L-glutamate + [protein]-L-lysine = ADP + phosphate + N(6)-([prokaryotic ubiquitin-like protein]-gamma-L-glutamyl)-[protein]-L-lysine.. Its pathway is protein degradation; proteasomal Pup-dependent pathway. It functions in the pathway protein modification; protein pupylation. In terms of biological role, catalyzes the covalent attachment of the prokaryotic ubiquitin-like protein modifier Pup to the proteasomal substrate proteins, thereby targeting them for proteasomal degradation. This tagging system is termed pupylation. The ligation reaction involves the side-chain carboxylate of the C-terminal glutamate of Pup and the side-chain amino group of a substrate lysine. This chain is Pup--protein ligase, found in Renibacterium salmoninarum (strain ATCC 33209 / DSM 20767 / JCM 11484 / NBRC 15589 / NCIMB 2235).